Consider the following 278-residue polypeptide: Large ribosomal subunit protein uL2 (278 aa).

Residues 218-278 (RPHNRGVVMN…IMRSRHQRKK (61 aa)) are disordered.

The protein belongs to the universal ribosomal protein uL2 family. As to quaternary structure, part of the 50S ribosomal subunit. Forms a bridge to the 30S subunit in the 70S ribosome.

Functionally, one of the primary rRNA binding proteins. Required for association of the 30S and 50S subunits to form the 70S ribosome, for tRNA binding and peptide bond formation. It has been suggested to have peptidyltransferase activity; this is somewhat controversial. Makes several contacts with the 16S rRNA in the 70S ribosome. The sequence is that of Large ribosomal subunit protein uL2 from Rhizobium etli (strain ATCC 51251 / DSM 11541 / JCM 21823 / NBRC 15573 / CFN 42).